A 190-amino-acid polypeptide reads, in one-letter code: MEHNTNMLPLENASILSEGSLQDGHRLWIGNVDPKITEYHLLKLLQKFGKVKQFDFLFHKSGPLEGQPRGYCFVNFETKAEAERAIHCLNGKMALSKKLVVRWAHAQIKRYDNCKNEKVLPISLEPSSSTEPTQSTLSVSAKIKAIEAKLKMMAENPDPLLPGQSSYSYFKANEKKKCTPYHKSSLKSKR.

The 82-residue stretch at 25-106 folds into the RRM domain; the sequence is HRLWIGNVDP…KKLVVRWAHA (82 aa).

This is Probable RNA-binding protein 18 (rbm18) from Xenopus laevis (African clawed frog).